The sequence spans 167 residues: Leptin (167 aa).

The N-terminal stretch at Met-1–Ala-21 is a signal peptide. Cys-117 and Cys-167 are joined by a disulfide.

Belongs to the leptin family.

It is found in the secreted. Functionally, key player in the regulation of energy balance and body weight control. Once released into the circulation, has central and peripheral effects by binding LEPR, found in many tissues, which results in the activation of several major signaling pathways. In the hypothalamus, acts as an appetite-regulating factor that induces a decrease in food intake and an increase in energy consumption by inducing anorexinogenic factors and suppressing orexigenic neuropeptides, also regulates bone mass and secretion of hypothalamo-pituitary-adrenal hormones. In the periphery, increases basal metabolism, influences reproductive function, regulates pancreatic beta-cell function and insulin secretion, is pro-angiogenic for endothelial cell and affects innate and adaptive immunity. In the arcuate nucleus of the hypothalamus, activates by depolarization POMC neurons inducing FOS and SOCS3 expression to release anorexigenic peptides and inhibits by hyperpolarization NPY neurons inducing SOCS3 with a consequent reduction on release of orexigenic peptides. In addition to its known satiety inducing effect, has a modulatory role in nutrient absorption. In the intestine, reduces glucose absorption by enterocytes by activating PKC and leading to a sequential activation of p38, PI3K and ERK signaling pathways which exerts an inhibitory effect on glucose absorption. Acts as a growth factor on certain tissues, through the activation of different signaling pathways increases expression of genes involved in cell cycle regulation such as CCND1, via JAK2-STAT3 pathway, or VEGFA, via MAPK1/3 and PI3K-AKT1 pathways. May also play an apoptotic role via JAK2-STAT3 pathway and up-regulation of BIRC5 expression. Pro-angiogenic, has mitogenic activity on vascular endothelial cells and plays a role in matrix remodeling by regulating the expression of matrix metalloproteinases (MMPs) and tissue inhibitors of metalloproteinases (TIMPs). In innate immunity, modulates the activity and function of neutrophils by increasing chemotaxis and the secretion of oxygen radicals. Increases phagocytosis by macrophages and enhances secretion of pro-inflammatory mediators. Increases cytotoxic ability of NK cells. Plays a pro-inflammatory role, in synergy with IL1B, by inducing NOS2 which promotes the production of IL6, IL8 and Prostaglandin E2, through a signaling pathway that involves JAK2, PI3K, MAP2K1/MEK1 and MAPK14/p38. In adaptive immunity, promotes the switch of memory T-cells towards T helper-1 cell immune responses. Increases CD4(+)CD25(-) T-cell proliferation and reduces autophagy during TCR (T-cell receptor) stimulation, through MTOR signaling pathway activation and BCL2 up-regulation. The sequence is that of Leptin (LEP) from Capra hircus (Goat).